We begin with the raw amino-acid sequence, 926 residues long: Isoleucine--tRNA ligase (926 aa).

Residues 1–21 (MKMKETLQLGKTAFPMRGNLP) form a disordered region. A 'HIGH' region motif is present at residues 57–67 (PYANGNIHLGH). Position 552 (Glu-552) interacts with L-isoleucyl-5'-AMP. A 'KMSKS' region motif is present at residues 593–597 (KMSKS). Lys-596 serves as a coordination point for ATP. Zn(2+)-binding residues include Cys-886, Cys-889, Cys-906, and Cys-909.

Belongs to the class-I aminoacyl-tRNA synthetase family. IleS type 1 subfamily. Monomer. Requires Zn(2+) as cofactor.

Its subcellular location is the cytoplasm. The catalysed reaction is tRNA(Ile) + L-isoleucine + ATP = L-isoleucyl-tRNA(Ile) + AMP + diphosphate. Catalyzes the attachment of isoleucine to tRNA(Ile). As IleRS can inadvertently accommodate and process structurally similar amino acids such as valine, to avoid such errors it has two additional distinct tRNA(Ile)-dependent editing activities. One activity is designated as 'pretransfer' editing and involves the hydrolysis of activated Val-AMP. The other activity is designated 'posttransfer' editing and involves deacylation of mischarged Val-tRNA(Ile). The sequence is that of Isoleucine--tRNA ligase from Enterococcus faecalis (strain ATCC 700802 / V583).